A 501-amino-acid polypeptide reads, in one-letter code: ATP synthase subunit alpha (501 aa).

169 to 176 (GDRQTGKT) is an ATP binding site.

Belongs to the ATPase alpha/beta chains family. As to quaternary structure, F-type ATPases have 2 components, CF(1) - the catalytic core - and CF(0) - the membrane proton channel. CF(1) has five subunits: alpha(3), beta(3), gamma(1), delta(1), epsilon(1). CF(0) has three main subunits: a(1), b(2) and c(9-12). The alpha and beta chains form an alternating ring which encloses part of the gamma chain. CF(1) is attached to CF(0) by a central stalk formed by the gamma and epsilon chains, while a peripheral stalk is formed by the delta and b chains.

The protein resides in the cell membrane. It carries out the reaction ATP + H2O + 4 H(+)(in) = ADP + phosphate + 5 H(+)(out). Produces ATP from ADP in the presence of a proton gradient across the membrane. The alpha chain is a regulatory subunit. The polypeptide is ATP synthase subunit alpha (Streptococcus pneumoniae (strain Hungary19A-6)).